Reading from the N-terminus, the 349-residue chain is Phosphoribosylformylglycinamidine cyclo-ligase (349 aa).

Belongs to the AIR synthase family.

It is found in the cytoplasm. The enzyme catalyses 2-formamido-N(1)-(5-O-phospho-beta-D-ribosyl)acetamidine + ATP = 5-amino-1-(5-phospho-beta-D-ribosyl)imidazole + ADP + phosphate + H(+). It participates in purine metabolism; IMP biosynthesis via de novo pathway; 5-amino-1-(5-phospho-D-ribosyl)imidazole from N(2)-formyl-N(1)-(5-phospho-D-ribosyl)glycinamide: step 2/2. The polypeptide is Phosphoribosylformylglycinamidine cyclo-ligase (Methanococcus vannielii (strain ATCC 35089 / DSM 1224 / JCM 13029 / OCM 148 / SB)).